A 495-amino-acid polypeptide reads, in one-letter code: Averantin hydroxylase (495 aa).

A helical transmembrane segment spans residues 12–32 (ILLLIVLTVLTPPSLALYRLW). 2 N-linked (GlcNAc...) asparagine glycosylation sites follow: Asn-258 and Asn-289. Heme is bound at residue Cys-436.

The protein belongs to the cytochrome P450 family. It depends on heme as a cofactor.

The protein resides in the membrane. The enzyme catalyses (1'S)-averantin + reduced [NADPH--hemoprotein reductase] + O2 = (1'S,5'R)-5'-hydroxyaverantin + oxidized [NADPH--hemoprotein reductase] + H2O. It carries out the reaction (1'S)-averantin + reduced [NADPH--hemoprotein reductase] + O2 = (1'S,5'S)-5'-hydroxyaverantin + oxidized [NADPH--hemoprotein reductase] + H2O + H(+). Its pathway is mycotoxin biosynthesis; aflatoxin biosynthesis. Its function is as follows. Averantin hydroxylase; part of the gene cluster that mediates the biosynthesis of aflatoxins, a group of polyketide-derived furanocoumarins, and part of the most toxic and carcinogenic compounds among the known mycotoxins. The four major aflatoxins produced by A.parasiticus are aflatoxin B1 (AFB1), aflatoxin B2 (AFB2), aflatoxin G1 (AFG1) and aflatoxin G2 (AFG2). Within the aflatoxin pathway, the cytochrome P450 monooxygenase aflG catalyzes the hydroxylation of AVN to 5'hydroxyaverantin (HAVN). The biosynthesis of aflatoxins begins with the norsolorinic acid synthase aflC that combines a hexanoyl starter unit produced by the fatty acid synthase aflA/aflB and 7 malonyl-CoA extender units to synthesize the precursor NOR. The second step is the conversion of NOR to averantin and requires the norsolorinic acid ketoreductase aflD, which catalyzes the dehydration of norsolorinic acid to form (1'S)-averantin. The norsolorinic acid reductases aflE and aflF may also play a role in the conversion of NOR to AVN. The cytochrome P450 monooxygenase aflG then catalyzes the hydroxylation of AVN to 5'hydroxyaverantin (HAVN). The next step is performed by the 5'-hydroxyaverantin dehydrogenase aflH that transforms HAVN to 5'-oxoaverantin (OAVN) which is further converted to averufin (AVF) by aflK that plays a dual role in the pathway, as a 5'-oxoaverantin cyclase that mediates conversion of 5'-oxoaverantin, as well as a versicolorin B synthase in a later step in the pathway. The averufin oxidase aflI catalyzes the conversion of AVF to versiconal hemiacetal acetate (VHA). VHA is then the substrate for the versiconal hemiacetal acetate esterase aflJ to yield versiconal (VAL). Versicolorin B synthase aflK then converts VAL to versicolorin B (VERB) by closing the bisfuran ring of aflatoxin which is required for DNA-binding, thus giving to aflatoxin its activity as a mutagen. Then, the activity of the versicolorin B desaturase aflL leads to versicolorin A (VERA). A branch point starts from VERB since it can also be converted to dihydrodemethylsterigmatocystin (DMDHST), probably also by aflL, VERA being a precursor for aflatoxins B1 and G1, and DMDHST for aflatoxins B2 and G2. Next, the versicolorin reductase aflM and the cytochrome P450 monooxygenase aflN are involved in conversion of VERA to demethylsterigmatocystin (DMST). AflX and aflY seem also involved in this step, through probable aflX-mediated epoxide ring-opening step following versicolorin A oxidation and aflY-mediated Baeyer-Villiger oxidation required for the formation of the xanthone ring. The methyltransferase aflO then leads to the modification of DMST to sterigmatocystin (ST), and of DMDHST to dihydrosterigmatocystin (DHST). Both ST and DHST are then substrates of the O-methyltransferase aflP to yield O-methylsterigmatocystin (OMST) and dihydro-O-methylsterigmatocystin (DHOMST), respectively. Finally OMST is converted to aflatoxins B1 and G1, and DHOMST to aflatoxins B2 and G2, via the action of several enzymes including O-methylsterigmatocystin oxidoreductase aflQ, the cytochrome P450 monooxygenase aflU, but also the NADH-dependent flavin oxidoreductase nadA which is specifically required for the synthesis of AFG1. This is Averantin hydroxylase from Aspergillus parasiticus (strain ATCC 56775 / NRRL 5862 / SRRC 143 / SU-1).